Reading from the N-terminus, the 236-residue chain is CO-responsive transcriptional regulator RcoM (236 aa).

Residues 1–64 (MDDFAYNLRR…PLRPKVAVLL (64 aa)) enclose the PAS domain. Residue histidine 52 participates in heme binding. An HTH LytTR-type domain is found at 131–236 (VPLGLGETTE…VTRLRGLLAI (106 aa)).

It depends on heme as a cofactor.

In terms of biological role, activates the expression of the CowN protein in response to carbon monoxide (CO). Is required to sustain N(2)-dependent growth in the presence of low levels of carbon monoxide (CO). The chain is CO-responsive transcriptional regulator RcoM (rcoM) from Rhodospirillum rubrum (strain ATCC 11170 / ATH 1.1.1 / DSM 467 / LMG 4362 / NCIMB 8255 / S1).